Consider the following 464-residue polypeptide: Keratin, type I cytoskeletal 28 (464 aa).

The tract at residues 1-85 (MSLRFSSGSR…GSEGGLFSGN (85 aa)) is head. A coil 1A region spans residues 86–121 (EKVTMQNLNDRLASYLDNVRALEEANAELERKIKSW). An IF rod domain is found at 86–401 (EKVTMQNLND…RLIDGDRNSC (316 aa)). The linker 1 stretch occupies residues 122–143 (YEKHGPGSCHGLDHDYSRYHLT). Residues 144–235 (IEDLKNKIIS…KNHEEEVKAL (92 aa)) are coil 1B. Residues 236-258 (QCVAGGNVNVEMNAAPGVDLTLL) form a linker 12 region. The coil 2 stretch occupies residues 259–397 (LNNMRAEYED…ETYCRLIDGD (139 aa)). The tail stretch occupies residues 398–464 (RNSCSKSKGF…NGKTKQRVPF (67 aa)). The segment covering 402–417 (SKSKGFGSGSPGNSSK) has biased composition (low complexity). 2 disordered regions span residues 402–422 (SKSK…LSRT) and 440–464 (SSRV…RVPF).

This sequence belongs to the intermediate filament family. As to quaternary structure, heterotetramer of two type I and two type II keratins.

Its subcellular location is the cytoplasm. Its function is as follows. Essential for the proper assembly of types I and II keratin protein complexes and the formation of keratin intermediate filaments in the inner root sheath (irs). This Bos taurus (Bovine) protein is Keratin, type I cytoskeletal 28.